The chain runs to 299 residues: ATP phosphoribosyltransferase (299 aa).

The protein belongs to the ATP phosphoribosyltransferase family. Long subfamily. In terms of assembly, equilibrium between an active dimeric form, an inactive hexameric form and higher aggregates. Interconversion between the various forms is largely reversible and is influenced by the natural substrates and inhibitors of the enzyme. It depends on Mg(2+) as a cofactor.

Its subcellular location is the cytoplasm. It carries out the reaction 1-(5-phospho-beta-D-ribosyl)-ATP + diphosphate = 5-phospho-alpha-D-ribose 1-diphosphate + ATP. Its pathway is amino-acid biosynthesis; L-histidine biosynthesis; L-histidine from 5-phospho-alpha-D-ribose 1-diphosphate: step 1/9. With respect to regulation, feedback inhibited by histidine. In terms of biological role, catalyzes the condensation of ATP and 5-phosphoribose 1-diphosphate to form N'-(5'-phosphoribosyl)-ATP (PR-ATP). Has a crucial role in the pathway because the rate of histidine biosynthesis seems to be controlled primarily by regulation of HisG enzymatic activity. This Escherichia coli O81 (strain ED1a) protein is ATP phosphoribosyltransferase.